Here is a 180-residue protein sequence, read N- to C-terminus: Protein PHLOEM PROTEIN 2-LIKE A9 (180 aa).

Positions 1 to 21 are disordered; sequence MSSQKSSHHKADSKMEQDNNR. Residues 9–21 show a composition bias toward basic and acidic residues; it reads HKADSKMEQDNNR.

The sequence is that of Protein PHLOEM PROTEIN 2-LIKE A9 (PP2A9) from Arabidopsis thaliana (Mouse-ear cress).